A 203-amino-acid chain; its full sequence is Ribosome-binding factor A (203 aa).

Residues 119–141 (LAEVRRDARPAGDEDPYRRPRTV) are compositionally biased toward basic and acidic residues. The interval 119–203 (LAEVRRDARP…SPGGDPTAGR (85 aa)) is disordered. Over residues 142–169 (DEDDEDEDEDLVDEFDEFDRVEELDADA) the composition is skewed to acidic residues.

The protein belongs to the RbfA family. In terms of assembly, monomer. Binds 30S ribosomal subunits, but not 50S ribosomal subunits or 70S ribosomes.

Its subcellular location is the cytoplasm. In terms of biological role, one of several proteins that assist in the late maturation steps of the functional core of the 30S ribosomal subunit. Associates with free 30S ribosomal subunits (but not with 30S subunits that are part of 70S ribosomes or polysomes). Required for efficient processing of 16S rRNA. May interact with the 5'-terminal helix region of 16S rRNA. This is Ribosome-binding factor A from Frankia alni (strain DSM 45986 / CECT 9034 / ACN14a).